The primary structure comprises 179 residues: Fimbrial subunit ElfA (179 aa).

The first 21 residues, 1–21 (MKKSVLTAFITVVCATSSVMA), serve as a signal peptide directing secretion.

This sequence belongs to the fimbrial protein family.

It localises to the fimbrium. Its function is as follows. Part of the elfADCG-ycbUVF fimbrial operon, which promotes adhesion of bacteria to different abiotic surfaces. ElfA is the major fimbrial subunit produced by this operon. This chain is Fimbrial subunit ElfA (elfA), found in Escherichia coli (strain K12).